Reading from the N-terminus, the 43-residue chain is METATLVAIFISCSLVSFTGYALYTAFGQPSKELRDPFEEHED.

Residues 5–27 traverse the membrane as a helical segment; the sequence is TLVAIFISCSLVSFTGYALYTAF.

It belongs to the PsbN family.

Its subcellular location is the plastid. The protein localises to the chloroplast thylakoid membrane. Its function is as follows. May play a role in photosystem I and II biogenesis. The polypeptide is Protein PsbN (Exsertotheca crispa (Moss)).